Reading from the N-terminus, the 599-residue chain is Elongation factor 4 (599 aa).

The tr-type G domain occupies 5–187 (STIRNFAIIA…AIVHRLPAPV (183 aa)). Residues 17-22 (DHGKST) and 134-137 (NKAD) contribute to the GTP site.

Belongs to the TRAFAC class translation factor GTPase superfamily. Classic translation factor GTPase family. LepA subfamily.

Its subcellular location is the cell inner membrane. The catalysed reaction is GTP + H2O = GDP + phosphate + H(+). Functionally, required for accurate and efficient protein synthesis under certain stress conditions. May act as a fidelity factor of the translation reaction, by catalyzing a one-codon backward translocation of tRNAs on improperly translocated ribosomes. Back-translocation proceeds from a post-translocation (POST) complex to a pre-translocation (PRE) complex, thus giving elongation factor G a second chance to translocate the tRNAs correctly. Binds to ribosomes in a GTP-dependent manner. This is Elongation factor 4 from Anaplasma marginale (strain Florida).